The following is a 335-amino-acid chain: MPIRHCIVHLIDKKPDGSPAVLHARDSELAASDAIENLLADLNDSYNAKQGKAWGLFHGESGAYPFSGWLKQYLDEEKDFATFSRVAIEHLQKLMEESNLSTGGHVLFAHYQQGMTEYLAIALLHHSEGVAVNAELDVTPSRHLDLGQLHLAARVNLSEWKNNQNSKQYISFIKGKNGKKVSDYFRDFIGCQEGVDGPGETRTLLKAFSDFVEKEDLPEESAREKTQTLVDYATTQTKLGEPVTLEELSSLIDEDRPEAFYDHIRNSDYGLSPEIPADKRTLNQFRRFTGRAEGLSISFEAHLLGSKVEYDEEAGTLVIKGLPTQLIDQLKRRKD.

The protein belongs to the YejK family.

The protein resides in the cytoplasm. It localises to the nucleoid. The sequence is that of Nucleoid-associated protein PSEEN4449 from Pseudomonas entomophila (strain L48).